The sequence spans 179 residues: Large ribosomal subunit protein uL6 (179 aa).

The protein belongs to the universal ribosomal protein uL6 family. In terms of assembly, part of the 50S ribosomal subunit.

In terms of biological role, this protein binds to the 23S rRNA, and is important in its secondary structure. It is located near the subunit interface in the base of the L7/L12 stalk, and near the tRNA binding site of the peptidyltransferase center. In Bifidobacterium longum subsp. infantis (strain ATCC 15697 / DSM 20088 / JCM 1222 / NCTC 11817 / S12), this protein is Large ribosomal subunit protein uL6.